Reading from the N-terminus, the 463-residue chain is NADH-quinone oxidoreductase subunit N (463 aa).

Transmembrane regions (helical) follow at residues 5–25 (LLYG…LMLL), 34–54 (AGSA…VMQL), 72–92 (FSEI…VYSL), 99–119 (KYWI…DSAG), 120–140 (FISL…LMVL), 154–174 (YLLL…LVYG), 196–216 (LAAS…FPFH), 230–250 (VTAF…VRIL), 259–279 (AVTV…ITAI), 286–303 (KMLA…MFAL), 314–334 (LLYY…CFSI), 356–376 (AILL…PGFL), 393–413 (VAVL…GVVL), and 432–452 (LCWT…FMLL).

The protein belongs to the complex I subunit 2 family. As to quaternary structure, NDH-1 is composed of 14 different subunits. Subunits NuoA, H, J, K, L, M, N constitute the membrane sector of the complex.

The protein resides in the cell inner membrane. The catalysed reaction is a quinone + NADH + 5 H(+)(in) = a quinol + NAD(+) + 4 H(+)(out). NDH-1 shuttles electrons from NADH, via FMN and iron-sulfur (Fe-S) centers, to quinones in the respiratory chain. The immediate electron acceptor for the enzyme in this species is believed to be ubiquinone. Couples the redox reaction to proton translocation (for every two electrons transferred, four hydrogen ions are translocated across the cytoplasmic membrane), and thus conserves the redox energy in a proton gradient. The chain is NADH-quinone oxidoreductase subunit N from Pelobacter propionicus (strain DSM 2379 / NBRC 103807 / OttBd1).